Consider the following 307-residue polypeptide: S-methyl-5'-thioadenosine phosphorylase (307 aa).

Residues Ser-16, 59–60 (RH), and 92–93 (SA) contribute to the phosphate site. Residue Met-198 participates in substrate binding. Ser-199 is a phosphate binding site. 222–224 (DYD) provides a ligand contact to substrate.

It belongs to the PNP/MTAP phosphorylase family. MTAP subfamily. In terms of assembly, homotrimer.

It is found in the cytoplasm. The protein localises to the nucleus. It catalyses the reaction S-methyl-5'-thioadenosine + phosphate = 5-(methylsulfanyl)-alpha-D-ribose 1-phosphate + adenine. The protein operates within amino-acid biosynthesis; L-methionine biosynthesis via salvage pathway; S-methyl-5-thio-alpha-D-ribose 1-phosphate from S-methyl-5'-thioadenosine (phosphorylase route): step 1/1. In terms of biological role, catalyzes the reversible phosphorylation of S-methyl-5'-thioadenosine (MTA) to adenine and 5-methylthioribose-1-phosphate. Involved in the breakdown of MTA, a major by-product of polyamine biosynthesis. Responsible for the first step in the methionine salvage pathway after MTA has been generated from S-adenosylmethionine. Has broad substrate specificity with 6-aminopurine nucleosides as preferred substrates. This is S-methyl-5'-thioadenosine phosphorylase from Schizosaccharomyces pombe (strain 972 / ATCC 24843) (Fission yeast).